Reading from the N-terminus, the 556-residue chain is Large cysteine-rich periplasmic protein OmcB (556 aa).

A signal peptide spans 1 to 22 (MSKLIRRVVTVLALTSMASCFA). Positions 23-40 (SGGIEAAVAESLITKIVA) are excised as a propeptide.

As to quaternary structure, part of a disulfide cross-linked outer membrane complex (COMC) composed of the major outer membrane porin (MOMP), the small cysteine-rich protein (OmcA) and the large cysteine-rich periplasmic protein (OmcB).

The protein resides in the periplasm. Its function is as follows. In elementary bodies (EBs, the infectious stage, which is able to survive outside the host cell) provides the structural integrity of the outer envelope through disulfide cross-links with the small cysteine-rich protein and the major outer membrane porin. It has been described in publications as the Sarkosyl-insoluble COMC (Chlamydia outer membrane complex), and serves as the functional equivalent of peptidoglycan. This chain is Large cysteine-rich periplasmic protein OmcB (omcB), found in Chlamydia pneumoniae (Chlamydophila pneumoniae).